The primary structure comprises 83 residues: CLAVATA3/ESR (CLE)-related protein 20 (83 aa).

The N-terminal stretch at 1–29 (MKNKNMNPSRPRLLCLIVFLFLVIVLSKA) is a signal peptide.

Belongs to the CLV3/ESR signal peptide family. In terms of tissue distribution, mostly expressed in roots, seedlings, leaves, flowers, stems and apex, and, to a lower extent, in siliques and pollen.

It localises to the secreted. Its subcellular location is the extracellular space. Its function is as follows. Extracellular signal peptide that regulates cell fate. Represses root apical meristem maintenance. Inhibits irreversibly root growth by reducing cell division rates in the root apical meristem. Regulates the transition of protophloem cells from proliferation to differentiation, thus impinging on postembryonic growth capacity of the root meristem; this signaling pathway requires CRN and CLV2. The protein is CLAVATA3/ESR (CLE)-related protein 20 of Arabidopsis thaliana (Mouse-ear cress).